Here is a 178-residue protein sequence, read N- to C-terminus: tRNA (cytidine(56)-2'-O)-methyltransferase (178 aa).

S-adenosyl-L-methionine-binding positions include Leu-84, 109 to 113, and 127 to 134; these read GAEKV and IGNQPHSE.

The protein belongs to the aTrm56 family. In terms of assembly, homodimer.

The protein localises to the cytoplasm. It carries out the reaction cytidine(56) in tRNA + S-adenosyl-L-methionine = 2'-O-methylcytidine(56) in tRNA + S-adenosyl-L-homocysteine + H(+). Its function is as follows. Specifically catalyzes the AdoMet-dependent 2'-O-ribose methylation of cytidine at position 56 in tRNAs. This chain is tRNA (cytidine(56)-2'-O)-methyltransferase, found in Methanococcoides burtonii (strain DSM 6242 / NBRC 107633 / OCM 468 / ACE-M).